Reading from the N-terminus, the 371-residue chain is DNA repair and recombination protein rti1 (371 aa).

The segment at 346–371 is disordered; that stretch reads IDHNRSMPIRRPSLTSNNSANTFSTK. Residues 358–371 show a composition bias toward polar residues; it reads SLTSNNSANTFSTK.

It belongs to the RAD52 family. As to quaternary structure, interacts with rph51 and rph54.

In terms of biological role, active in the repair of DNA damage and in mating-type switching. Probably involved in the repair of DNA double-strands breaks. Has a role in promoting S phase completion. The chain is DNA repair and recombination protein rti1 (rti1) from Schizosaccharomyces pombe (strain 972 / ATCC 24843) (Fission yeast).